Reading from the N-terminus, the 84-residue chain is Putative membrane protein insertion efficiency factor (84 aa).

The protein belongs to the UPF0161 family.

The protein localises to the cell inner membrane. Its function is as follows. Could be involved in insertion of integral membrane proteins into the membrane. In Acidiphilium cryptum (strain JF-5), this protein is Putative membrane protein insertion efficiency factor.